Here is a 1255-residue protein sequence, read N- to C-terminus: DNA-directed RNA polymerase subunit beta' (1255 aa).

Residues Cys60, Cys62, Cys77, and Cys80 each coordinate Zn(2+). Residues Asp503, Asp505, and Asp507 each contribute to the Mg(2+) site. 4 residues coordinate Zn(2+): Cys875, Cys950, Cys957, and Cys960.

It belongs to the RNA polymerase beta' chain family. The RNAP catalytic core consists of 2 alpha, 1 beta, 1 beta' and 1 omega subunit. When a sigma factor is associated with the core the holoenzyme is formed, which can initiate transcription. It depends on Mg(2+) as a cofactor. Zn(2+) is required as a cofactor.

The catalysed reaction is RNA(n) + a ribonucleoside 5'-triphosphate = RNA(n+1) + diphosphate. Functionally, DNA-dependent RNA polymerase catalyzes the transcription of DNA into RNA using the four ribonucleoside triphosphates as substrates. The chain is DNA-directed RNA polymerase subunit beta' from Mycoplasma mycoides subsp. mycoides SC (strain CCUG 32753 / NCTC 10114 / PG1).